Consider the following 218-residue polypeptide: Pyrrolidone-carboxylate peptidase 2 (218 aa).

Residues Glu-83, Cys-146, and His-170 contribute to the active site.

This sequence belongs to the peptidase C15 family. In terms of assembly, homotetramer.

The protein resides in the cytoplasm. The enzyme catalyses Release of an N-terminal pyroglutamyl group from a polypeptide, the second amino acid generally not being Pro.. Its function is as follows. Removes 5-oxoproline from various penultimate amino acid residues except L-proline. The protein is Pyrrolidone-carboxylate peptidase 2 of Photorhabdus laumondii subsp. laumondii (strain DSM 15139 / CIP 105565 / TT01) (Photorhabdus luminescens subsp. laumondii).